Reading from the N-terminus, the 63-residue chain is Metallothionein-2 (63 aa).

The protein belongs to the metallothionein superfamily. Type 6 family.

Functionally, this protein binds cations of several transition elements. In Caenorhabditis elegans, this protein is Metallothionein-2 (mtl-2).